A 556-amino-acid polypeptide reads, in one-letter code: Portal protein (556 aa).

Residues 527 to 556 (AQGAKTLSETQTSDPSALTAIANAAGAPQQ) are disordered. Residues 533 to 542 (LSETQTSDPS) are compositionally biased toward polar residues.

Belongs to the podoviridae head-to-tail connector protein family. Homododecamer.

The protein resides in the virion. In terms of biological role, forms the portal vertex of the capsid. This portal plays critical roles in head assembly, genome packaging, neck/tail attachment, and genome ejection. The portal protein multimerizes as a single ring-shaped homododecamer arranged around a central channel. This chain is Portal protein, found in Salmonella phage epsilon15.